We begin with the raw amino-acid sequence, 172 residues long: Centrin-2 (172 aa).

The segment at 1–30 (MASNFKKANMASSSQRKRMSPKPELTEEQK) is disordered. At Ala-2 the chain carries N-acetylalanine. Residues 2–25 (ASNFKKANMASSSQRKRMSPKPEL) form a required for self-assembly region. Residue Ser-20 is modified to Phosphoserine. Lys-22 is covalently cross-linked (Glycyl lysine isopeptide (Lys-Gly) (interchain with G-Cter in SUMO2)). Position 26 is a phosphothreonine (Thr-26). EF-hand domains are found at residues 28-63 (EQKQ…LGFE), 64-99 (PKKE…KMSE), 101-136 (DTKE…LGEN), and 137-172 (LTDE…TSLY). Ca(2+)-binding residues include Asp-41, Asp-43, Thr-45, Thr-47, and Glu-52. Ca(2+) contacts are provided by Asp-150, Asp-152, Asp-154, Glu-156, and Glu-161.

It belongs to the centrin family. As to quaternary structure, monomer. Homooligomer. Interacts with SFI1. Interacts with CCP110. Component of the XPC complex composed of XPC, RAD23B and CETN2. Component of the nuclear pore complex (NPC)-associated TREX-2 complex (transcription and export complex 2), composed of at least GANP, 2 copies of ENY2, PCID2, SEM1/DSS1, and either centrin CETN2 or centrin CETN3. The TREX-2 complex also associates with ALYREF/ALY and with the nucleoporin NUP153. Interacts with USP49. Forms a microtubule-associated complex with POC5, POC1B and FAM161A. Interacts with CCDC15.

It localises to the cytoplasm. The protein resides in the cytoskeleton. The protein localises to the microtubule organizing center. It is found in the centrosome. Its subcellular location is the centriole. It localises to the nucleus envelope. The protein resides in the nucleus. The protein localises to the nuclear pore complex. Its function is as follows. Plays a fundamental role in microtubule organizing center structure and function. Required for centriole duplication and correct spindle formation. Has a role in regulating cytokinesis and genome stability via cooperation with CALM1 and CCP110. Functionally, involved in global genome nucleotide excision repair (GG-NER) by acting as component of the XPC complex. Cooperatively with RAD23B appears to stabilize XPC. In vitro, stimulates DNA binding of the XPC:RAD23B dimer. The XPC complex is proposed to represent the first factor bound at the sites of DNA damage and together with other core recognition factors, XPA, RPA and the TFIIH complex, is part of the pre-incision (or initial recognition) complex. The XPC complex recognizes a wide spectrum of damaged DNA characterized by distortions of the DNA helix such as single-stranded loops, mismatched bubbles or single-stranded overhangs. The orientation of XPC complex binding appears to be crucial for inducing a productive NER. XPC complex is proposed to recognize and to interact with unpaired bases on the undamaged DNA strand which is followed by recruitment of the TFIIH complex and subsequent scanning for lesions in the opposite strand in a 5'-to-3' direction by the NER machinery. Cyclobutane pyrimidine dimers (CPDs) which are formed upon UV-induced DNA damage esacpe detection by the XPC complex due to a low degree of structural perurbation. Instead they are detected by the UV-DDB complex which in turn recruits and cooperates with the XPC complex in the respective DNA repair. In terms of biological role, as a component of the TREX-2 complex, involved in the export of mRNAs to the cytoplasm through the nuclear pores. This chain is Centrin-2 (CETN2), found in Homo sapiens (Human).